Consider the following 628-residue polypeptide: Probable alpha-L-arabinofuranosidase A (628 aa).

The N-terminal stretch at 1 to 25 (MVAFSALSGVSALSLLLCLVQHAHG) is a signal peptide. Asn36, Asn51, Asn74, Asn152, Asn171, Asn260, Asn359, and Asn493 each carry an N-linked (GlcNAc...) asparagine glycan.

This sequence belongs to the glycosyl hydrolase 51 family.

The protein localises to the secreted. It carries out the reaction Hydrolysis of terminal non-reducing alpha-L-arabinofuranoside residues in alpha-L-arabinosides.. It participates in glycan metabolism; L-arabinan degradation. Functionally, alpha-L-arabinofuranosidase involved in the degradation of arabinoxylan, a major component of plant hemicellulose. Acts only on small linear 1,5-alpha-linked L-arabinofuranosyl oligosaccharides. This chain is Probable alpha-L-arabinofuranosidase A (abfA), found in Aspergillus awamori (Black koji mold).